Reading from the N-terminus, the 261-residue chain is 5'-nucleotidase SurE (261 aa).

Residues Asp-18, Asp-19, Ser-50, and Asn-102 each contribute to the a divalent metal cation site.

It belongs to the SurE nucleotidase family. A divalent metal cation serves as cofactor.

The protein localises to the cytoplasm. It catalyses the reaction a ribonucleoside 5'-phosphate + H2O = a ribonucleoside + phosphate. Functionally, nucleotidase that shows phosphatase activity on nucleoside 5'-monophosphates. This chain is 5'-nucleotidase SurE, found in Rhodospirillum rubrum (strain ATCC 11170 / ATH 1.1.1 / DSM 467 / LMG 4362 / NCIMB 8255 / S1).